We begin with the raw amino-acid sequence, 261 residues long: Urease accessory protein UreD (261 aa).

This sequence belongs to the UreD family. In terms of assembly, ureD, UreF and UreG form a complex that acts as a GTP-hydrolysis-dependent molecular chaperone, activating the urease apoprotein by helping to assemble the nickel containing metallocenter of UreC. The UreE protein probably delivers the nickel.

It localises to the cytoplasm. Required for maturation of urease via the functional incorporation of the urease nickel metallocenter. In Haemophilus influenzae (strain ATCC 51907 / DSM 11121 / KW20 / Rd), this protein is Urease accessory protein UreD.